Consider the following 259-residue polypeptide: UPF0246 protein PP_1289 (259 aa).

Belongs to the UPF0246 family.

The polypeptide is UPF0246 protein PP_1289 (Pseudomonas putida (strain ATCC 47054 / DSM 6125 / CFBP 8728 / NCIMB 11950 / KT2440)).